Here is a 52-residue protein sequence, read N- to C-terminus: Large ribosomal subunit protein bL32c (52 aa).

The protein belongs to the bacterial ribosomal protein bL32 family.

The protein resides in the plastid. It is found in the chloroplast. This Aethionema grandiflorum (Persian stone-cress) protein is Large ribosomal subunit protein bL32c.